Reading from the N-terminus, the 275-residue chain is 2,3,4,5-tetrahydropyridine-2,6-dicarboxylate N-succinyltransferase (275 aa).

The substrate site is built by Arg105 and Asp142.

Belongs to the transferase hexapeptide repeat family. In terms of assembly, homotrimer.

It localises to the cytoplasm. The catalysed reaction is (S)-2,3,4,5-tetrahydrodipicolinate + succinyl-CoA + H2O = (S)-2-succinylamino-6-oxoheptanedioate + CoA. Its pathway is amino-acid biosynthesis; L-lysine biosynthesis via DAP pathway; LL-2,6-diaminopimelate from (S)-tetrahydrodipicolinate (succinylase route): step 1/3. In Pectobacterium atrosepticum (strain SCRI 1043 / ATCC BAA-672) (Erwinia carotovora subsp. atroseptica), this protein is 2,3,4,5-tetrahydropyridine-2,6-dicarboxylate N-succinyltransferase.